The primary structure comprises 239 residues: Increased recombination centers protein 22-2 (239 aa).

The first 19 residues, 1 to 19 (MKLSTIFTAFAATIATVAG), serve as a signal peptide directing secretion. At 20–161 (YETTGSKQTV…AAVSFFDPRL (142 aa)) the chain is on the lumenal side. Residues 162 to 182 (IFLELVLLITFAGLIYVGYEI) form a helical membrane-spanning segment. At 183–239 (WGKQYFKGVAPVKAKKVSAAKASSPVATGPSTTSATGYDTNWIPESHLKQKKTKKVN) the chain is on the cytoplasmic side. Positions 202–222 (AKASSPVATGPSTTSATGYDT) are disordered. The span at 211 to 221 (GPSTTSATGYD) shows a compositional bias: polar residues.

This sequence belongs to the IRC22 family.

It is found in the endoplasmic reticulum membrane. Is probably involved in a pathway contributing to genomic integrity. This Candida albicans (strain SC5314 / ATCC MYA-2876) (Yeast) protein is Increased recombination centers protein 22-2 (IRC22-2).